We begin with the raw amino-acid sequence, 177 residues long: NADH-quinone oxidoreductase subunit B (177 aa).

[4Fe-4S] cluster-binding residues include cysteine 56, cysteine 57, cysteine 121, and cysteine 151.

Belongs to the complex I 20 kDa subunit family. In terms of assembly, NDH-1 is composed of 14 different subunits. Subunits NuoB, C, D, E, F, and G constitute the peripheral sector of the complex. It depends on [4Fe-4S] cluster as a cofactor.

Its subcellular location is the cell inner membrane. It carries out the reaction a quinone + NADH + 5 H(+)(in) = a quinol + NAD(+) + 4 H(+)(out). In terms of biological role, NDH-1 shuttles electrons from NADH, via FMN and iron-sulfur (Fe-S) centers, to quinones in the respiratory chain. Couples the redox reaction to proton translocation (for every two electrons transferred, four hydrogen ions are translocated across the cytoplasmic membrane), and thus conserves the redox energy in a proton gradient. The polypeptide is NADH-quinone oxidoreductase subunit B (Jannaschia sp. (strain CCS1)).